The primary structure comprises 1466 residues: ABC transporter G family member 10 (1466 aa).

Residues 23 to 45 (NTPQYENNNNNNNNTSGNESPNI) show a composition bias toward low complexity. Residues 23-47 (NTPQYENNNNNNNNTSGNESPNILN) are disordered. The region spanning 138–392 (VTIFNLFRPS…FLDLGFDCEP (255 aa)) is the ABC transporter 1 domain. Residues 497–724 (WGDRFALISK…NGSTMSYQDQ (228 aa)) enclose the ABC transmembrane type-2 1 domain. A run of 6 helical transmembrane segments spans residues 501-521 (FALISKYISIIVQTFVYASLF), 537-557 (AIYAAILFNAFVSAGELGLTF), 586-606 (IPLTAIQVTIFSVIVYFMYGL), 611-631 (GKFFIFLFTIFGSTLSMVAFF), 641-661 (LYVSQNILNVFILFMFTYGGY), and 767-787 (IITFLWWIFFVIINMIALELF). The ABC transporter 2 domain occupies 838–1082 (FTWNHIHYTV…LTSYFERNGV (245 aa)). ATP is bound at residue 874–881 (GSSGAGKT). The region spanning 1177 to 1399 (SYVYGIFTQA…LTCKEYFKPT (223 aa)) is the ABC transmembrane type-2 2 domain. 6 helical membrane passes run 1178–1198 (YVYGIFTQAAASGLIIGFTFW), 1214–1234 (IFEILFLGILYIFIAIPQFLI), 1253–1273 (FAISIVIVELPFVAVAGTICF), 1290–1310 (FYFYITFILFLFICVSLGQVV), 1319–1339 (LAQTILPLLLVMLFLFCGVLV), and 1440–1460 (YGILWAFFIFNIIMVVSFVYL).

Belongs to the ABC transporter superfamily. ABCG family. PDR (TC 3.A.1.205) subfamily.

Its subcellular location is the membrane. This Dictyostelium discoideum (Social amoeba) protein is ABC transporter G family member 10 (abcG10).